The primary structure comprises 177 residues: Cell division inhibitor SulA (177 aa).

Residues 112–118 (ALASGNY) form a ftsZ binding region. Residues 170–177 (KIHSIHYH) are lon protease binding.

Belongs to the SulA family. As to quaternary structure, interacts with FtsZ. In terms of processing, is rapidly cleaved and degraded by the Lon protease once DNA damage is repaired.

Functionally, component of the SOS system and an inhibitor of cell division. Accumulation of SulA causes rapid cessation of cell division and the appearance of long, non-septate filaments. In the presence of GTP, binds a polymerization-competent form of FtsZ in a 1:1 ratio, thus inhibiting FtsZ polymerization and therefore preventing it from participating in the assembly of the Z ring. This mechanism prevents the premature segregation of damaged DNA to daughter cells during cell division. This chain is Cell division inhibitor SulA, found in Photorhabdus laumondii subsp. laumondii (strain DSM 15139 / CIP 105565 / TT01) (Photorhabdus luminescens subsp. laumondii).